The sequence spans 138 residues: HTH-type transcriptional regulator CueR (138 aa).

One can recognise an HTH merR-type domain in the interval 1–69 (MNISDVAKKT…LEECGELVNL (69 aa)). The segment at residues 4–23 (SDVAKKTGLTSKAIRFYEEK) is a DNA-binding region (H-T-H motif). Cu(+)-binding residues include C112 and C120.

As to quaternary structure, homodimer.

The protein resides in the cytoplasm. Functionally, regulates the transcription of the copA and cueO genes. It detects cytoplasmic copper stress and activates transcription in response to increasing copper concentrations. In Salmonella typhi, this protein is HTH-type transcriptional regulator CueR (cueR).